Reading from the N-terminus, the 363-residue chain is Outer membrane protein P2 (363 aa).

A signal peptide spans 1–20 (MKKTLAALIVGAFAASAANA).

The protein belongs to the Gram-negative porin family. In terms of assembly, homotrimer.

It is found in the cell outer membrane. Its function is as follows. Forms pores that allow passive diffusion of small molecules across the outer membrane. The chain is Outer membrane protein P2 (ompP2) from Haemophilus influenzae.